The chain runs to 90 residues: Large ribosomal subunit protein uL16c (90 aa).

The protein belongs to the universal ribosomal protein uL16 family. In terms of assembly, part of the 50S ribosomal subunit.

The protein localises to the plastid. It localises to the chloroplast. In Oenothera ammophila (Evening primerose), this protein is Large ribosomal subunit protein uL16c (rpl16).